A 278-amino-acid chain; its full sequence is Undecaprenyl-diphosphatase (278 aa).

The next 8 membrane-spanning stretches (helical) occupy residues 3–23 (YILI…IPIS), 42–62 (VAYS…IFYF), 88–108 (FLVI…LFVI), 112–132 (ILGL…IVIY), 152–172 (IIIV…RSGM), 190–210 (LSFI…VLFS), 225–245 (GLLI…NALL), and 253–273 (VVLL…LSDI).

This sequence belongs to the UppP family.

The protein localises to the cell membrane. It carries out the reaction di-trans,octa-cis-undecaprenyl diphosphate + H2O = di-trans,octa-cis-undecaprenyl phosphate + phosphate + H(+). In terms of biological role, catalyzes the dephosphorylation of undecaprenyl diphosphate (UPP). This is Undecaprenyl-diphosphatase from Saccharolobus solfataricus (strain ATCC 35092 / DSM 1617 / JCM 11322 / P2) (Sulfolobus solfataricus).